A 293-amino-acid chain; its full sequence is D-alanine--D-alanine ligase (293 aa).

One can recognise an ATP-grasp domain in the interval 98 to 291; that stretch reads KIIWKQHNLT…FNKLVVAIIN (194 aa). 124–177 serves as a coordination point for ATP; that stretch reads DFPLPWMVKPTLEGSSIGISKVDSQIQLNNALMLAWQYNSHALIEQWIEGDEYT. Positions 245, 258, and 260 each coordinate Mg(2+).

It belongs to the D-alanine--D-alanine ligase family. It depends on Mg(2+) as a cofactor. Requires Mn(2+) as cofactor.

It localises to the cytoplasm. The catalysed reaction is 2 D-alanine + ATP = D-alanyl-D-alanine + ADP + phosphate + H(+). The protein operates within cell wall biogenesis; peptidoglycan biosynthesis. In terms of biological role, cell wall formation. This is D-alanine--D-alanine ligase from Ruthia magnifica subsp. Calyptogena magnifica.